The primary structure comprises 203 residues: Suppressor of RNA silencing p3 (203 aa).

The protein belongs to the tenuiviruses p3 protein family. In terms of assembly, homodimer.

It localises to the host cytoplasm. Functionally, acts as a suppressor of RNA-mediated gene silencing, also known as post-transcriptional gene silencing (PTGS), presumably through the binding of dsRNA. The polypeptide is Suppressor of RNA silencing p3 (Oryza sativa (Rice)).